We begin with the raw amino-acid sequence, 115 residues long: Evasin P1182 (115 aa).

Residues 1-26 (MALNWSFRVIFVSTMWCALLKFATLG) form the signal peptide. 4 disulfides stabilise this stretch: C38–C58, C54–C94, C70–C99, and C89–C108. N-linked (GlcNAc...) asparagine glycosylation is found at N45, N72, and N103.

The protein resides in the secreted. Salivary chemokine-binding protein which binds to host chemokines CCL2, CCL3, CCL4, CCL8 and CCL18. This chain is Evasin P1182, found in Amblyomma maculatum (Gulf Coast tick).